A 199-amino-acid polypeptide reads, in one-letter code: MAISLEKGQRIDLTKGKAGLSKLMVGLGWDPVSSGGGFFSKLLGGGGPNIDCDASVLMLENGKFTDKKNLIYFGNLKSRCGGVQHTGDNLTGDGAGDDEQIMIDLDKVPGNIDKLVFVVNIYDCVRRKQDFGMIQNAFIRVVDQSNHEEMLKYNLRDNYAGRTSLITAEIYRSGSEWKFAAVGEGTNDTRLEDIISRYV.

This sequence belongs to the CAPAB/TerDEXZ family.

Its subcellular location is the cytoplasm. The chain is Stress response protein SCP2 (yceC) from Bacillus subtilis (strain 168).